We begin with the raw amino-acid sequence, 488 residues long: Annexin A7 (488 aa).

The segment covering 1-18 (MSYPGYPPTGYPPFPGYP) has biased composition (pro residues). Disordered regions lie at residues 1–49 (MSYP…YPQV) and 71–143 (GYPG…PTYP). Positions 1–143 (MSYPGYPPTG…QYPGGQPTYP (143 aa)) are repeat-rich region. Residues 5–20 (GYPPTGYPPFPGYPPA) are 3 X 5 AA tandem repeats of G-Y-P-P-X. The span at 89–102 (PGQGFGVPPGGAGF) shows a compositional bias: gly residues. Annexin repeat units follow at residues 185-256 (FDAI…ALFM), 257-328 (PPTY…SMCQ), 340-412 (QMAQ…TILQ), and 416-487 (NRPA…AIVG). K233 is modified (N6-acetyllysine).

This sequence belongs to the annexin family. Interacts with PDCD6. In terms of tissue distribution, isoform 1 is expressed in brain, heart and skeletal muscle. Isoform 2 is more abundant in liver, lung, kidney, spleen, fibroblasts and placenta.

In terms of biological role, calcium/phospholipid-binding protein which promotes membrane fusion and is involved in exocytosis. The sequence is that of Annexin A7 (ANXA7) from Homo sapiens (Human).